The chain runs to 436 residues: UPF0597 protein YhaM (436 aa).

It belongs to the UPF0597 family.

In Salmonella choleraesuis (strain SC-B67), this protein is UPF0597 protein YhaM.